Consider the following 178-residue polypeptide: Probable DNA-directed RNA polymerase subunit delta (178 aa).

One can recognise an HTH HARE-type domain in the interval L14–W81. 2 disordered regions span residues E89–D122 and L141–K178. Composition is skewed to acidic residues over residues D105–D122, L141–H150, and T161–K178.

This sequence belongs to the RpoE family. RNAP is composed of a core of 2 alpha, a beta and a beta' subunits. The core is associated with a delta subunit and one of several sigma factors.

Participates in both the initiation and recycling phases of transcription. In the presence of the delta subunit, RNAP displays an increased specificity of transcription, a decreased affinity for nucleic acids, and an increased efficiency of RNA synthesis because of enhanced recycling. The polypeptide is Probable DNA-directed RNA polymerase subunit delta (Listeria innocua serovar 6a (strain ATCC BAA-680 / CLIP 11262)).